The following is a 75-amino-acid chain: uncharacterized protein (75 aa).

The N-terminal stretch at Met1 to Ala18 is a signal peptide.

This is an uncharacterized protein from Treponema pallidum (strain Nichols).